Here is a 503-residue protein sequence, read N- to C-terminus: MAILLGLVVGVLTLVAWWVLQNYTYWKRRGIPHDPPNIPLGNTGELWRTMPLAGILKRTYLKFRKQTDGPFAGFYLYAMKYIVITDVDFVKTVLIRDFDKFHDRGVYHNEKDDPLTNNLATIEGQKWKNLRQKLTHTFTSAKMKSMFSTVLNVGDEMIRVVDEKISSSSQTLEVTDIVSRFTSDVIGICAFGLKCNSLRDPKAEFVQMGYSALRERRHGWLVDLLIFGMPKLAVKLGFQFLLPSVQKFYMKIVQDTIDYRMKRKVTRNDFMDTLIDMKQQYDKGDKENGLAFNEVAAQAFVFFLAGFEAGSTTMGFTLYELACNQDVQDKLRAEIDSVLERYNGKLEYDSMQDLFYMEKVINESLRKHPVVAHLARIATKPYQHSNPKYFIEAGTGVLVSTLGIHHDPEFYPEPEKFIPERFDEEQVKKRPTCAFLPFGAGPRNCIGLRFGRMQVIIGLALLIHNFRFELHPKTPVPMKYTINNLLLGSEGGIHLNITKVVRD.

Cys-445 lines the heme pocket.

It belongs to the cytochrome P450 family. It depends on heme as a cofactor.

It localises to the endoplasmic reticulum membrane. The protein localises to the microsome membrane. In terms of biological role, may be involved in the metabolism of insect hormones and in the breakdown of synthetic insecticides. The chain is Probable cytochrome P450 6a19 (Cyp6a19) from Drosophila melanogaster (Fruit fly).